The following is a 173-amino-acid chain: DKQLDADVSPKPTIFLPSIAETKLQKAGTYLCLLEKFFPDVIKIHWQEKKSNTILGSQEGNTMKTNDTYMKFSWLTVPEKSLDKEHRCIVRHENNKNGVDQEIIFPPIKTDVITMDPKDNCSKDANDTLLLQLTNTSAYYMYLLLLLKSVVYFAIITCCLLRRTAFCCNGEKS.

Residues 10 to 104 form the Ig-like domain; the sequence is PKPTIFLPSI…NKNGVDQEII (95 aa). Residues C32 and C88 are joined by a disulfide bond. N-linked (GlcNAc...) asparagine glycosylation is found at N66, N120, N126, and N135. A helical transmembrane segment spans residues 139 to 161; sequence YYMYLLLLLKSVVYFAIITCCLL.

Gamma-delta TR is a heterodimer composed of a gamma and delta chain; disulfide-linked. The gamma-delta TR is associated with the transmembrane signaling CD3 coreceptor proteins following the stoichiometry: a single gamma-delta TR heterodimer associates with one CD3D-CD3E heterodimer, one CD3G-CD3E heterodimer and one CD247 homodimer forming a stable octameric structure. Upon activation, gamma-delta TR complex associates with FCER1G to initiate intracellular signaling.

It is found in the cell membrane. Constant region of T cell receptor (TR) gamma chain that participates in the antigen recognition. Gamma-delta TRs recognize a variety of self and foreign non-peptide antigens frequently expressed at the epithelial boundaries between the host and external environment, including endogenous lipids presented by MH-like protein CD1D and phosphoantigens presented by butyrophilin-like molecule BTN3A1. Upon antigen recognition induces rapid, innate-like immune responses involved in pathogen clearance and tissue repair. Binding of gamma-delta TR complex to antigen triggers phosphorylation of immunoreceptor tyrosine-based activation motifs (ITAMs) in the CD3 chains by the LCK and FYN kinases, allowing the recruitment, phosphorylation, and activation of ZAP70 that facilitates phosphorylation of the scaffolding proteins LCP2 and LAT. This lead to the formation of a supramolecular signalosome that recruits the phospholipase PLCG1, resulting in calcium mobilization and ERK activation, ultimately leading to T cell expansion and differentiation into effector cells. Gamma-delta TRs are produced through somatic rearrangement of a limited repertoire of variable (V), diversity (D), and joining (J) genes. The potential diversity of gamma-delta TRs is conferred by the unique ability to rearrange (D) genes in tandem and to utilize all three reading frames. The combinatorial diversity is considerably increased by the sequence exonuclease trimming and random nucleotide (N) region additions which occur during the V-(D)-J rearrangements. The protein is T cell receptor gamma constant 1 of Homo sapiens (Human).